The sequence spans 99 residues: Probable small ribosomal subunit protein cS23 (99 aa).

This sequence belongs to the chloroplast-specific ribosomal protein cS23 family. In terms of assembly, part of the 30S ribosomal subunit.

Its function is as follows. Probably a ribosomal protein or a ribosome-associated protein. In Synechococcus sp. (strain JA-2-3B'a(2-13)) (Cyanobacteria bacterium Yellowstone B-Prime), this protein is Probable small ribosomal subunit protein cS23.